A 179-amino-acid chain; its full sequence is Cytochrome b6-f complex iron-sulfur subunit (179 aa).

The chain crosses the membrane as a helical span at residues 21–43 (LLTFGSATGVALGMLYPVVRYFI). A Rieske domain is found at 61–162 (GNDISVSDFL…AAVSDDKITF (102 aa)). 4 residues coordinate [2Fe-2S] cluster: cysteine 108, histidine 110, cysteine 126, and histidine 129. Cysteine 113 and cysteine 128 are joined by a disulfide.

Belongs to the Rieske iron-sulfur protein family. In terms of assembly, the 4 large subunits of the cytochrome b6-f complex are cytochrome b6, subunit IV (17 kDa polypeptide, PetD), cytochrome f and the Rieske protein, while the 4 small subunits are PetG, PetL, PetM and PetN. The complex functions as a dimer. [2Fe-2S] cluster is required as a cofactor.

Its subcellular location is the cellular thylakoid membrane. It carries out the reaction 2 oxidized [plastocyanin] + a plastoquinol + 2 H(+)(in) = 2 reduced [plastocyanin] + a plastoquinone + 4 H(+)(out). Functionally, component of the cytochrome b6-f complex, which mediates electron transfer between photosystem II (PSII) and photosystem I (PSI), cyclic electron flow around PSI, and state transitions. This is Cytochrome b6-f complex iron-sulfur subunit from Cyanothece sp. (strain PCC 7425 / ATCC 29141).